Reading from the N-terminus, the 332-residue chain is Solute carrier family 25 member 16 (332 aa).

Solcar repeat units follow at residues 34–120 (FYWL…YKTF), 128–216 (SGHV…LKSV), and 238–328 (LKTH…MKQF). 6 consecutive transmembrane segments (helical) span residues 37-57 (LRSF…VAPL), 88-108 (GYLG…PYGA), 134-154 (LMAG…LDVV), 191-211 (GLMP…FTFG), 244-264 (LLCG…FDVT), and 299-319 (GLYR…AVAF).

The protein belongs to the mitochondrial carrier (TC 2.A.29) family.

The protein localises to the mitochondrion inner membrane. In terms of biological role, may be involved in the transport of coenzyme A in the mitochondrial matrix. Very little is known about the physiological function of this carrier. The protein is Solute carrier family 25 member 16 of Mus musculus (Mouse).